A 1497-amino-acid polypeptide reads, in one-letter code: DNA-directed RNA polymerase subunit beta (1497 aa).

Belongs to the RNA polymerase beta chain family. As to quaternary structure, the RNAP catalytic core consists of 2 alpha, 1 beta, 1 beta' and 1 omega subunit. When a sigma factor is associated with the core the holoenzyme is formed, which can initiate transcription.

It carries out the reaction RNA(n) + a ribonucleoside 5'-triphosphate = RNA(n+1) + diphosphate. Its function is as follows. DNA-dependent RNA polymerase catalyzes the transcription of DNA into RNA using the four ribonucleoside triphosphates as substrates. The polypeptide is DNA-directed RNA polymerase subunit beta (Trichlorobacter lovleyi (strain ATCC BAA-1151 / DSM 17278 / SZ) (Geobacter lovleyi)).